The sequence spans 409 residues: Cdc42 effector protein 1 (409 aa).

Positions 1–29 are disordered; the sequence is MPGPQGGTGAPTMSLGKLSPVGWVSSSHG. 2 positions are modified to phosphoserine: S19 and S27. A Phosphothreonine modification is found at T34. The CRIB domain maps to 38 to 52; it reads ISPPLGDFRHTMHVG. A Phosphoserine modification is found at S39. The residue at position 53 (R53) is an Omega-N-methylarginine. Phosphoserine occurs at positions 65, 77, 101, 113, 121, and 139. The segment covering 167-189 has biased composition (basic and acidic residues); that stretch reads PRVEKHSNRDRDRDPDHSQDREQ. The disordered stretch occupies residues 167–203; the sequence is PRVEKHSNRDRDRDPDHSQDREQSSFPSEPTPNPELR. Phosphoserine occurs at positions 191, 205, 207, and 210. Repeat copies occupy residues 235–241, 242–248, and 255–261. The 3 X 7 AA tandem repeats of [PT]-[AT]-A-[ENT]-[PT]-[PTS]-[AG] stretch occupies residues 235 to 284; it reads PAAETPVPTANPPAPAANPAPTAKPPAHAITTLDAVTSLPASAVTSLPAP. Disordered regions lie at residues 237–260 and 282–329; these read AETP…AKPP and PAPA…FDRH. Residues 243–258 are compositionally biased toward pro residues; the sequence is TANPPAPAANPAPTAK. The segment covering 282 to 291 has biased composition (low complexity); that stretch reads PAPAAASSPS. S312, S332, S368, and S371 each carry phosphoserine.

The protein belongs to the BORG/CEP family. Interacts with RHOQ and CDC42, in a GTP-dependent manner.

The protein resides in the endomembrane system. It is found in the cytoplasm. It localises to the cytoskeleton. Probably involved in the organization of the actin cytoskeleton. Induced membrane extensions in fibroblasts. The sequence is that of Cdc42 effector protein 1 (Cdc42ep1) from Mus musculus (Mouse).